The chain runs to 896 residues: Isoleucine--tRNA ligase (896 aa).

The 'HIGH' region motif lies at 57–67 (PYANNNIHIGH). An L-isoleucyl-5'-AMP-binding site is contributed by Glu543. The 'KMSKS' region signature appears at 584 to 588 (KMSKS). Residue Lys587 participates in ATP binding. The Zn(2+) site is built by Cys869, Cys872, Cys885, and Cys888.

The protein belongs to the class-I aminoacyl-tRNA synthetase family. IleS type 1 subfamily. Monomer. Zn(2+) is required as a cofactor.

It is found in the cytoplasm. It carries out the reaction tRNA(Ile) + L-isoleucine + ATP = L-isoleucyl-tRNA(Ile) + AMP + diphosphate. Its function is as follows. Catalyzes the attachment of isoleucine to tRNA(Ile). As IleRS can inadvertently accommodate and process structurally similar amino acids such as valine, to avoid such errors it has two additional distinct tRNA(Ile)-dependent editing activities. One activity is designated as 'pretransfer' editing and involves the hydrolysis of activated Val-AMP. The other activity is designated 'posttransfer' editing and involves deacylation of mischarged Val-tRNA(Ile). This Acholeplasma laidlawii (strain PG-8A) protein is Isoleucine--tRNA ligase.